Consider the following 118-residue polypeptide: UPF0102 protein CMM_1377 (118 aa).

The protein belongs to the UPF0102 family.

This chain is UPF0102 protein CMM_1377, found in Clavibacter michiganensis subsp. michiganensis (strain NCPPB 382).